We begin with the raw amino-acid sequence, 335 residues long: DNA-directed RNA polymerase subunit alpha (335 aa).

Residues 1–248 (MTIQTSRTLS…GLFAPLQEVS (248 aa)) form an alpha N-terminal domain (alpha-NTD) region. Residues 256–335 (KPDEDNQKNQ…LPRTREKGKA (80 aa)) are alpha C-terminal domain (alpha-CTD).

It belongs to the RNA polymerase alpha chain family. In cyanobacteria the RNAP catalytic core is composed of 2 alpha, 1 beta, 1 beta', 1 gamma and 1 omega subunit. When a sigma factor is associated with the core the holoenzyme is formed, which can initiate transcription.

The enzyme catalyses RNA(n) + a ribonucleoside 5'-triphosphate = RNA(n+1) + diphosphate. Its function is as follows. DNA-dependent RNA polymerase catalyzes the transcription of DNA into RNA using the four ribonucleoside triphosphates as substrates. The polypeptide is DNA-directed RNA polymerase subunit alpha (Synechococcus sp. (strain JA-2-3B'a(2-13)) (Cyanobacteria bacterium Yellowstone B-Prime)).